A 365-amino-acid chain; its full sequence is Ribosomal RNA large subunit methyltransferase M (365 aa).

S-adenosyl-L-methionine is bound by residues Ser194, 227 to 230, Asp246, Asp266, and Asp284; that span reads CPGG. Lys313 (proton acceptor) is an active-site residue.

Belongs to the class I-like SAM-binding methyltransferase superfamily. RNA methyltransferase RlmE family. RlmM subfamily. As to quaternary structure, monomer.

It is found in the cytoplasm. The enzyme catalyses cytidine(2498) in 23S rRNA + S-adenosyl-L-methionine = 2'-O-methylcytidine(2498) in 23S rRNA + S-adenosyl-L-homocysteine + H(+). Functionally, catalyzes the 2'-O-methylation at nucleotide C2498 in 23S rRNA. This chain is Ribosomal RNA large subunit methyltransferase M, found in Pasteurella multocida (strain Pm70).